Here is a 343-residue protein sequence, read N- to C-terminus: Zinc finger protein STP3 (343 aa).

2 disordered regions span residues 31 to 56 and 71 to 140; these read YNGE…SGSA and SNDV…KPRK. The segment covering 33-45 has biased composition (polar residues); that stretch reads GEASSASTHPTLP. 3 stretches are compositionally biased toward low complexity: residues 46–56, 71–86, and 94–120; these read NMNISNGSGSA, SNDV…FLPS, and SASA…AGPS. 2 positions are modified to phosphoserine: S71 and S111. A C2H2-type zinc finger spans residues 169–191; that stretch reads HKCPICHRGFARNNDLLRHKKRH. The interval 198 to 222 is disordered; sequence SQSGVLSNHNDGKGGSVSPNDDDTH.

It is found in the nucleus. This is Zinc finger protein STP3 (STP3) from Saccharomyces cerevisiae (strain ATCC 204508 / S288c) (Baker's yeast).